A 101-amino-acid chain; its full sequence is Putative defensin-like protein 253 (101 aa).

The signal sequence occupies residues 1-23 (MRFASLFVVYCTFMFLDISHVKC). 4 cysteine pairs are disulfide-bonded: C31–C84, C41–C66, C49–C76, and C64–C78.

This sequence belongs to the DEFL family.

Its subcellular location is the secreted. This Arabidopsis thaliana (Mouse-ear cress) protein is Putative defensin-like protein 253 (SCRL15).